The following is a 125-amino-acid chain: Secretion system apparatus protein SsaO (125 aa).

This chain is Secretion system apparatus protein SsaO (ssaO), found in Salmonella typhimurium (strain LT2 / SGSC1412 / ATCC 700720).